A 276-amino-acid polypeptide reads, in one-letter code: MPEMPEVETVRRTLTPLVKGKTIAKIIIWYPKIIVNNPDEFVEKLTNKKILKIDRYGKYLLFRFSDDLTMVSHLRMEGKYHLVTPDHPKGKHEHVEFVFTDGTALRYADVRKFGRMHLVETGTEKQTTGIRHLGPEPNTEEFSVEYFINALSRKKKNIKNTLLDQTVVCGLGNIYVDEVLWQSKIHPLSSAKSIPADKIVDLYHNINHTITVATKERGTTVHTYLDANGDIGGYQNMLQVYGHAGEECNNCGTILEKIKVNGRGTTFCPHCQVLYK.

The Schiff-base intermediate with DNA role is filled by Pro-2. The Proton donor role is filled by Glu-3. Catalysis depends on Lys-58, which acts as the Proton donor; for beta-elimination activity. DNA-binding residues include His-92, Arg-111, and Lys-154. The FPG-type zinc-finger motif lies at Gln-239–Val-273. Arg-263 serves as the catalytic Proton donor; for delta-elimination activity.

This sequence belongs to the FPG family. As to quaternary structure, monomer. Zn(2+) serves as cofactor.

The enzyme catalyses Hydrolysis of DNA containing ring-opened 7-methylguanine residues, releasing 2,6-diamino-4-hydroxy-5-(N-methyl)formamidopyrimidine.. It catalyses the reaction 2'-deoxyribonucleotide-(2'-deoxyribose 5'-phosphate)-2'-deoxyribonucleotide-DNA = a 3'-end 2'-deoxyribonucleotide-(2,3-dehydro-2,3-deoxyribose 5'-phosphate)-DNA + a 5'-end 5'-phospho-2'-deoxyribonucleoside-DNA + H(+). In terms of biological role, involved in base excision repair of DNA damaged by oxidation or by mutagenic agents. Acts as a DNA glycosylase that recognizes and removes damaged bases. Has a preference for oxidized purines, such as 7,8-dihydro-8-oxoguanine (8-oxoG). Has AP (apurinic/apyrimidinic) lyase activity and introduces nicks in the DNA strand. Cleaves the DNA backbone by beta-delta elimination to generate a single-strand break at the site of the removed base with both 3'- and 5'-phosphates. This is Formamidopyrimidine-DNA glycosylase from Lactobacillus johnsonii (strain CNCM I-12250 / La1 / NCC 533).